The sequence spans 148 residues: Ribosome maturation factor RimP (148 aa).

The protein belongs to the RimP family.

The protein resides in the cytoplasm. Required for maturation of 30S ribosomal subunits. This Thermosipho africanus (strain TCF52B) protein is Ribosome maturation factor RimP.